A 129-amino-acid chain; its full sequence is DNA-directed RNA polymerase subunit omega (129 aa).

The interval 77 to 98 is disordered; it reads VDEPESEVVPALSSAPQNPEAI.

Belongs to the RNA polymerase subunit omega family. In terms of assembly, the RNAP catalytic core consists of 2 alpha, 1 beta, 1 beta' and 1 omega subunit. When a sigma factor is associated with the core the holoenzyme is formed, which can initiate transcription.

The catalysed reaction is RNA(n) + a ribonucleoside 5'-triphosphate = RNA(n+1) + diphosphate. Its function is as follows. Promotes RNA polymerase assembly. Latches the N- and C-terminal regions of the beta' subunit thereby facilitating its interaction with the beta and alpha subunits. This is DNA-directed RNA polymerase subunit omega from Methylocella silvestris (strain DSM 15510 / CIP 108128 / LMG 27833 / NCIMB 13906 / BL2).